The following is a 215-amino-acid chain: Autophagy-related protein 101 (215 aa).

A disordered region spans residues 124–147 (PVGKSHHSKLVMDPGEASEERSSR).

The protein belongs to the ATG101 family. In terms of assembly, interacts with ATG11 and ATG13A.

It localises to the cytoplasmic vesicle. The protein localises to the autophagosome. Accessory protein involved in autophagy. Acts as a scaffold protein of the ATG1-ATG13 complex for faithful delivery of autophagic vesicles to the vacuole. Required for selective mitophagy. The polypeptide is Autophagy-related protein 101 (Arabidopsis thaliana (Mouse-ear cress)).